Here is a 55-residue protein sequence, read N- to C-terminus: MAKPTTVKIRLVSSADTGFFYVTRKNPRNQTEKMSLRKYDPVVRKHVEFKEAKIK.

This sequence belongs to the bacterial ribosomal protein bL33 family.

This is Large ribosomal subunit protein bL33 from Zymomonas mobilis subsp. mobilis (strain ATCC 31821 / ZM4 / CP4).